Reading from the N-terminus, the 199-residue chain is Hematopoietic prostaglandin D synthase (199 aa).

The GST N-terminal domain occupies 2 to 79 (PNYKLTYFNM…YLTKNTDLAG (78 aa)). Residues Y8, R14, W39, 49 to 51 (GKI), and 63 to 64 (QS) contribute to the glutathione site. Residues 81–199 (TEMEQCHVDA…WIKRRPQTKL (119 aa)) enclose the GST C-terminal domain.

It belongs to the GST superfamily. Sigma family. As to quaternary structure, homodimer. Glutathione serves as cofactor. In terms of tissue distribution, expressed in a number of megakaryocytic cell lines but not in platelets. Highly expressed in adipose tissue, macrophages and placenta. Also expressed at lower levels in lung, heart, lymph nodes, appendix, bone marrow and fetal liver.

It localises to the cytoplasm. It carries out the reaction prostaglandin H2 = prostaglandin D2. The enzyme catalyses RX + glutathione = an S-substituted glutathione + a halide anion + H(+). The catalysed reaction is 2-glyceryl-prostaglandin H2 = 2-glyceryl-prostaglandin D2. With respect to regulation, prostaglandin PGD2 synthesis is stimulated by calcium and magnesium ions. One calcium or magnesium ion is bound between the subunits of the homodimer. The interactions with the protein are for the most part mediated via water molecules. Magnesium increases the affinity for glutathione, while calcium has no effect on the affinity for glutathione. Its function is as follows. Bifunctional enzyme which catalyzes both the conversion of PGH2 to PGD2, a prostaglandin involved in smooth muscle contraction/relaxation and a potent inhibitor of platelet aggregation, and the conjugation of glutathione with a wide range of aryl halides and organic isothiocyanates. Also exhibits low glutathione-peroxidase activity towards cumene hydroperoxide. This Homo sapiens (Human) protein is Hematopoietic prostaglandin D synthase.